A 372-amino-acid chain; its full sequence is N-methyl-L-tryptophan oxidase (372 aa).

4 to 34 (DLIIIGSGSVGAAAGYYATRAGLNVLMTDAH) lines the FAD pocket. An S-8alpha-FAD cysteine modification is found at cysteine 308.

The protein belongs to the MSOX/MTOX family. MTOX subfamily. As to quaternary structure, monomer. The cofactor is FAD.

It catalyses the reaction N(alpha)-methyl-L-tryptophan + O2 + H2O = L-tryptophan + formaldehyde + H2O2. Functionally, catalyzes the oxidative demethylation of N-methyl-L-tryptophan. This chain is N-methyl-L-tryptophan oxidase, found in Escherichia coli O1:K1 / APEC.